We begin with the raw amino-acid sequence, 166 residues long: Large ribosomal subunit protein uL10 (166 aa).

This sequence belongs to the universal ribosomal protein uL10 family. In terms of assembly, part of the ribosomal stalk of the 50S ribosomal subunit. The N-terminus interacts with L11 and the large rRNA to form the base of the stalk. The C-terminus forms an elongated spine to which L12 dimers bind in a sequential fashion forming a multimeric L10(L12)X complex.

Forms part of the ribosomal stalk, playing a central role in the interaction of the ribosome with GTP-bound translation factors. The chain is Large ribosomal subunit protein uL10 from Streptococcus uberis (strain ATCC BAA-854 / 0140J).